A 415-amino-acid polypeptide reads, in one-letter code: DNA double-strand break repair protein Mre11 (415 aa).

Asp-10, His-12, Asp-51, and Asn-86 together coordinate Mn(2+). His-87 (proton donor) is an active-site residue. The Mn(2+) site is built by His-174, His-208, and His-210.

The protein belongs to the MRE11/RAD32 family. As to quaternary structure, homodimer. Forms a heterotetramer composed of two Mre11 subunits and two Rad50 subunits. It depends on Mn(2+) as a cofactor.

Nuclease activity is regulated by Rad50. In terms of biological role, part of the Rad50/Mre11 complex, which is involved in the early steps of DNA double-strand break (DSB) repair. The complex may facilitate opening of the processed DNA ends to aid in the recruitment of HerA and NurA. Mre11 binds to DSB ends and has both double-stranded 3'-5' exonuclease activity and single-stranded endonuclease activity. The protein is DNA double-strand break repair protein Mre11 of Pyrococcus abyssi (strain GE5 / Orsay).